We begin with the raw amino-acid sequence, 461 residues long: ATP synthase subunit beta 2 (461 aa).

Position 151–158 (151–158 (GGAGVGKT)) interacts with ATP.

Belongs to the ATPase alpha/beta chains family. In terms of assembly, F-type ATPases have 2 components, CF(1) - the catalytic core - and CF(0) - the membrane proton channel. CF(1) has five subunits: alpha(3), beta(3), gamma(1), delta(1), epsilon(1). CF(0) has three main subunits: a(1), b(2) and c(9-12). The alpha and beta chains form an alternating ring which encloses part of the gamma chain. CF(1) is attached to CF(0) by a central stalk formed by the gamma and epsilon chains, while a peripheral stalk is formed by the delta and b chains.

The protein resides in the cell inner membrane. It catalyses the reaction ATP + H2O + 4 H(+)(in) = ADP + phosphate + 5 H(+)(out). Functionally, produces ATP from ADP in the presence of a proton gradient across the membrane. The catalytic sites are hosted primarily by the beta subunits. This is ATP synthase subunit beta 2 from Pseudoalteromonas atlantica (strain T6c / ATCC BAA-1087).